Here is a 653-residue protein sequence, read N- to C-terminus: Fructose-1,6-bisphosphatase class 3 (653 aa).

The protein belongs to the FBPase class 3 family. The cofactor is Mn(2+).

It catalyses the reaction beta-D-fructose 1,6-bisphosphate + H2O = beta-D-fructose 6-phosphate + phosphate. It participates in carbohydrate biosynthesis; gluconeogenesis. The polypeptide is Fructose-1,6-bisphosphatase class 3 (Listeria monocytogenes serovar 1/2a (strain ATCC BAA-679 / EGD-e)).